Reading from the N-terminus, the 502-residue chain is ATP synthase subunit alpha (502 aa).

169 to 176 (GDRQTGKT) is a binding site for ATP.

It belongs to the ATPase alpha/beta chains family. As to quaternary structure, F-type ATPases have 2 components, CF(1) - the catalytic core - and CF(0) - the membrane proton channel. CF(1) has five subunits: alpha(3), beta(3), gamma(1), delta(1), epsilon(1). CF(0) has three main subunits: a(1), b(2) and c(9-12). The alpha and beta chains form an alternating ring which encloses part of the gamma chain. CF(1) is attached to CF(0) by a central stalk formed by the gamma and epsilon chains, while a peripheral stalk is formed by the delta and b chains.

Its subcellular location is the cell membrane. The catalysed reaction is ATP + H2O + 4 H(+)(in) = ADP + phosphate + 5 H(+)(out). Functionally, produces ATP from ADP in the presence of a proton gradient across the membrane. The alpha chain is a regulatory subunit. The protein is ATP synthase subunit alpha of Priestia megaterium (strain ATCC 12872 / QMB1551) (Bacillus megaterium).